A 202-amino-acid chain; its full sequence is uncharacterized protein (202 aa).

A GST N-terminal domain is found at 1 to 78; that stretch reads MKLVGSYTSP…YIELMNVAPA (78 aa). Glutathione contacts are provided by residues Ser9, Val49, and 62-63; that span reads DS. One can recognise a GST C-terminal domain in the interval 83–202; the sequence is DPLESLRVRK…SFARTEPPKA (120 aa).

This sequence belongs to the GST superfamily. HSP26 family.

In terms of biological role, glutathione (GSH) transferase homolog, that might be involved in selenium metabolism. This is an uncharacterized protein from Escherichia coli (strain K12).